A 151-amino-acid chain; its full sequence is Methylated-DNA--protein-cysteine methyltransferase (151 aa).

The Nucleophile; methyl group acceptor role is filled by Cys-119.

It belongs to the MGMT family.

Its subcellular location is the cytoplasm. The catalysed reaction is a 6-O-methyl-2'-deoxyguanosine in DNA + L-cysteinyl-[protein] = S-methyl-L-cysteinyl-[protein] + a 2'-deoxyguanosine in DNA. The enzyme catalyses a 4-O-methyl-thymidine in DNA + L-cysteinyl-[protein] = a thymidine in DNA + S-methyl-L-cysteinyl-[protein]. In terms of biological role, involved in the cellular defense against the biological effects of O6-methylguanine (O6-MeG) and O4-methylthymine (O4-MeT) in DNA. Repairs the methylated nucleobase in DNA by stoichiometrically transferring the methyl group to a cysteine residue in the enzyme. This is a suicide reaction: the enzyme is irreversibly inactivated. This is Methylated-DNA--protein-cysteine methyltransferase from Saccharolobus islandicus (strain M.16.27) (Sulfolobus islandicus).